A 274-amino-acid polypeptide reads, in one-letter code: Large ribosomal subunit protein uL2 (274 aa).

Disordered stretches follow at residues 28 to 59 and 222 to 274; these read APYA…GGHK and GAAM…RRTK. Positions 39–49 are enriched in polar residues; it reads KSGGRNNNGRI. Over residues 229–239 the composition is skewed to basic and acidic residues; that stretch reads DHPHGGGEGRS.

Belongs to the universal ribosomal protein uL2 family. Part of the 50S ribosomal subunit. Forms a bridge to the 30S subunit in the 70S ribosome.

One of the primary rRNA binding proteins. Required for association of the 30S and 50S subunits to form the 70S ribosome, for tRNA binding and peptide bond formation. It has been suggested to have peptidyltransferase activity; this is somewhat controversial. Makes several contacts with the 16S rRNA in the 70S ribosome. The chain is Large ribosomal subunit protein uL2 from Marinomonas sp. (strain MWYL1).